The primary structure comprises 157 residues: Crossover junction endodeoxyribonuclease RuvC (157 aa).

Residues aspartate 7, glutamate 67, and aspartate 139 contribute to the active site. Aspartate 7, glutamate 67, and aspartate 139 together coordinate Mg(2+).

This sequence belongs to the RuvC family. As to quaternary structure, homodimer which binds Holliday junction (HJ) DNA. The HJ becomes 2-fold symmetrical on binding to RuvC with unstacked arms; it has a different conformation from HJ DNA in complex with RuvA. In the full resolvosome a probable DNA-RuvA(4)-RuvB(12)-RuvC(2) complex forms which resolves the HJ. It depends on Mg(2+) as a cofactor.

The protein localises to the cytoplasm. The enzyme catalyses Endonucleolytic cleavage at a junction such as a reciprocal single-stranded crossover between two homologous DNA duplexes (Holliday junction).. Its function is as follows. The RuvA-RuvB-RuvC complex processes Holliday junction (HJ) DNA during genetic recombination and DNA repair. Endonuclease that resolves HJ intermediates. Cleaves cruciform DNA by making single-stranded nicks across the HJ at symmetrical positions within the homologous arms, yielding a 5'-phosphate and a 3'-hydroxyl group; requires a central core of homology in the junction. The consensus cleavage sequence is 5'-(A/T)TT(C/G)-3'. Cleavage occurs on the 3'-side of the TT dinucleotide at the point of strand exchange. HJ branch migration catalyzed by RuvA-RuvB allows RuvC to scan DNA until it finds its consensus sequence, where it cleaves and resolves the cruciform DNA. This Prochlorococcus marinus (strain MIT 9301) protein is Crossover junction endodeoxyribonuclease RuvC.